The chain runs to 83 residues: Defensin-like protein 194 (83 aa).

The N-terminal stretch at 1–27 (MAMKSVSNFAIFLILFLVTSEISEIEA) is a signal peptide. Disulfide bonds link cysteine 32-cysteine 78, cysteine 44-cysteine 68, cysteine 53-cysteine 73, and cysteine 57-cysteine 75.

Belongs to the DEFL family. Protease inhibitor I18 (RTI/MTI-2) subfamily.

It localises to the secreted. This is Defensin-like protein 194 (ATTI3) from Arabidopsis thaliana (Mouse-ear cress).